A 1088-amino-acid chain; its full sequence is DNA polymerase delta catalytic subunit (1088 aa).

Belongs to the DNA polymerase type-B family. Heterodimer with subunits of 125 kDa and 50 kDa. The 125 kDa subunit contains the polymerase active site and most likely the active site for the 3'-5' exonuclease activity.

It is found in the nucleus. It carries out the reaction DNA(n) + a 2'-deoxyribonucleoside 5'-triphosphate = DNA(n+1) + diphosphate. In terms of biological role, this polymerase possesses two enzymatic activities: DNA synthesis (polymerase) and an exonucleolytic activity that degrades single-stranded DNA in the 3'- to 5'-direction. This chain is DNA polymerase delta catalytic subunit (POLD1), found in Glycine max (Soybean).